A 114-amino-acid polypeptide reads, in one-letter code: Small ribosomal subunit protein bS6 (114 aa).

Belongs to the bacterial ribosomal protein bS6 family.

Functionally, binds together with bS18 to 16S ribosomal RNA. The sequence is that of Small ribosomal subunit protein bS6 from Bacteroides thetaiotaomicron (strain ATCC 29148 / DSM 2079 / JCM 5827 / CCUG 10774 / NCTC 10582 / VPI-5482 / E50).